A 532-amino-acid polypeptide reads, in one-letter code: Deoxyribodipyrimidine photo-lyase (532 aa).

The segment at 1 to 57 (MDSKKRSHSTGGEAENMESQESKAKRKPLQKHQFSKSNVVQKEEKDKTEGEEKGAEG) is disordered. A compositionally biased stretch (basic residues) spans 24–34 (AKRKPLQKHQF). Over residues 41-55 (QKEEKDKTEGEEKGA) the composition is skewed to basic and acidic residues. One can recognise a Photolyase/cryptochrome alpha/beta domain in the interval 97 to 229 (QAFVYWMSRD…QVDAHNIVPC (133 aa)). A DNA-binding site is contributed by Arg322. Interaction with DNA regions lie at residues 368–376 (EAVVRRELA) and 442–443 (GF). 468–470 (YLN) serves as a coordination point for FAD.

The protein belongs to the DNA photolyase class-2 family. The cofactor is FAD.

The enzyme catalyses cyclobutadipyrimidine (in DNA) = 2 pyrimidine residues (in DNA).. Functionally, involved in repair of UV radiation-induced DNA damage. Catalyzes the light-dependent monomerization (300-600 nm) of cyclobutyl pyrimidine dimers (in cis-syn configuration), which are formed between adjacent bases on the same DNA strand upon exposure to ultraviolet radiation. The chain is Deoxyribodipyrimidine photo-lyase (PHR) from Potorous tridactylus (Potoroo).